A 57-amino-acid polypeptide reads, in one-letter code: U13-myrmicitoxin-Mri1a (57 aa).

A signal peptide spans 1-23; that stretch reads MKIIHVLLLVAVVAITMSPSIMA. The propeptide occupies 24 to 29; it reads ESVAEA. Glutamic acid 1-amide is present on glutamate 56.

As to expression, expressed by the venom gland.

The protein resides in the secreted. Its function is as follows. Induces paralysis 1 hour after injection into insects (blowfly L.caesar) but does not appear to be lethal. The protein is U13-myrmicitoxin-Mri1a of Manica rubida (European giant red ant).